Consider the following 331-residue polypeptide: MRPALAVGLVFAGCCSNVIFLELLARKHPGCGNIVTFAQFLFIAVEGFLFEADLGRKPPAIPIRYYAIMVTMFFTVSVVNNYALNLNIAMPLHMIFRSGSLIANMILGIIILKKRYSIFKYTSIALVSVGIFICTFMSAKQVTSQSSLSENDGFQAFVWWLLGIGALTFALLMSARMGIFQETLYKQFGKHSKEALFYNHALPLPGFIFLASDIYDHAVLFNKSELYEIPGIGVTLPIMWFYLLMNIITQYVCIRGVFILTTECASLTVTLVVTLRKFVSLIFSILYFQNPFTLWHWLGTLFVFIGTLMYTEVWNNLGTTKSEPQKDNKKN.

11 consecutive transmembrane segments (helical) span residues alanine 4–leucine 24, glycine 30–phenylalanine 50, proline 59–valine 79, leucine 92–leucine 112, serine 117–methionine 137, glycine 153–methionine 173, alanine 201–phenylalanine 221, isoleucine 229–threonine 249, tyrosine 251–leucine 267, threonine 268–phenylalanine 288, and proline 291–threonine 311. The Mediates endoplasmic reticulum retention signature appears at lysine 326–asparagine 331.

The protein belongs to the nucleotide-sugar transporter family. SLC35B subfamily.

The protein localises to the endoplasmic reticulum membrane. The enzyme catalyses UDP-N-acetyl-alpha-D-glucosamine(in) + UDP-alpha-D-glucuronate(out) = UDP-N-acetyl-alpha-D-glucosamine(out) + UDP-alpha-D-glucuronate(in). It carries out the reaction UDP-alpha-D-xylose(in) + UDP-alpha-D-glucuronate(out) = UDP-alpha-D-xylose(out) + UDP-alpha-D-glucuronate(in). In terms of biological role, antiporter that transports nucleotide sugars across the endoplasmic reticulum (ER) membrane in exchange for another nucleotide sugar. May couple UDP-alpha-D-glucuronate (UDP-GlcA) or UDP-alpha-D-xylose (UDP-Xyl) efflux to UDP-alpha-D-glucuronate (UDP-GlcA) influx into the ER lumen, which in turn stimulates glucuronidation and excretion of endobiotics and xenobiotics. The protein is Nucleotide sugar transporter SLC35B4 (SLC35B4) of Macaca fascicularis (Crab-eating macaque).